Here is a 516-residue protein sequence, read N- to C-terminus: Probable 2-methylcitrate dehydratase (516 aa).

This sequence belongs to the PrpD family.

The catalysed reaction is (2S,3S)-2-methylcitrate = 2-methyl-cis-aconitate + H2O. Its pathway is organic acid metabolism; propanoate degradation. Its function is as follows. Catalyzes the stereospecific dehydration of (2S,3S)-2-methylcitrate (2-MC) to yield the cis isomer of 2-methyl-aconitate. The polypeptide is Probable 2-methylcitrate dehydratase (PDH1) (Saccharomyces cerevisiae (strain ATCC 204508 / S288c) (Baker's yeast)).